The sequence spans 193 residues: Transmembrane protein 066L (193 aa).

Helical transmembrane passes span 14 to 34 and 48 to 68; these read VLFA…GLVW and LVVE…LVVV.

Belongs to the IIV-6 357R family.

Its subcellular location is the membrane. The protein is Transmembrane protein 066L of Invertebrate iridescent virus 3 (IIV-3).